Consider the following 517-residue polypeptide: NADH-quinone oxidoreductase subunit N (517 aa).

Transmembrane regions (helical) follow at residues 14–34 (LAPT…EAFV), 40–60 (HMVQ…MVVV), 77–97 (GPAL…LLLI), 131–151 (ATEV…FVAA), 154–174 (LLTM…LCAL), 189–209 (YFLL…LVYG), 238–258 (VLLF…AAAA), 272–292 (PTPI…GALL), 306–326 (FTPI…VLAV), 334–354 (LLAY…LAPS), 362–382 (MFYL…VTLV), 404–424 (FYAG…LTSG), 451–471 (SMVL…SEPG), and 481–501 (GWLT…LGVV).

The protein belongs to the complex I subunit 2 family. NDH-1 is composed of 14 different subunits. Subunits NuoA, H, J, K, L, M, N constitute the membrane sector of the complex.

The protein localises to the cell membrane. It carries out the reaction a quinone + NADH + 5 H(+)(in) = a quinol + NAD(+) + 4 H(+)(out). In terms of biological role, NDH-1 shuttles electrons from NADH, via FMN and iron-sulfur (Fe-S) centers, to quinones in the respiratory chain. The immediate electron acceptor for the enzyme in this species is believed to be a menaquinone. Couples the redox reaction to proton translocation (for every two electrons transferred, four hydrogen ions are translocated across the cytoplasmic membrane), and thus conserves the redox energy in a proton gradient. The chain is NADH-quinone oxidoreductase subunit N from Salinispora arenicola (strain CNS-205).